Consider the following 392-residue polypeptide: Probable tRNA pseudouridine synthase D 1 (392 aa).

The active-site Nucleophile is Asp-92. Residues 167–354 (YFLNYYGVQR…FIGDRRAMIG (188 aa)) form the TRUD domain.

The protein belongs to the pseudouridine synthase TruD family.

The enzyme catalyses uridine(13) in tRNA = pseudouridine(13) in tRNA. Functionally, could be responsible for synthesis of pseudouridine from uracil-13 in transfer RNAs. In Methanocaldococcus jannaschii (strain ATCC 43067 / DSM 2661 / JAL-1 / JCM 10045 / NBRC 100440) (Methanococcus jannaschii), this protein is Probable tRNA pseudouridine synthase D 1.